Here is a 318-residue protein sequence, read N- to C-terminus: Porphobilinogen deaminase (318 aa).

The residue at position 241 (cysteine 241) is an S-(dipyrrolylmethanemethyl)cysteine.

Belongs to the HMBS family. In terms of assembly, monomer. The cofactor is dipyrromethane.

The catalysed reaction is 4 porphobilinogen + H2O = hydroxymethylbilane + 4 NH4(+). It functions in the pathway porphyrin-containing compound metabolism; protoporphyrin-IX biosynthesis; coproporphyrinogen-III from 5-aminolevulinate: step 2/4. Functionally, tetrapolymerization of the monopyrrole PBG into the hydroxymethylbilane pre-uroporphyrinogen in several discrete steps. The chain is Porphobilinogen deaminase from Geobacter metallireducens (strain ATCC 53774 / DSM 7210 / GS-15).